We begin with the raw amino-acid sequence, 568 residues long: Phosphoprotein (568 aa).

Disordered stretches follow at residues 1-22 (MDQD…PGGR) and 40-320 (PTDI…GIGE). The span at 7 to 20 (ILKEDSEVERKAPG) shows a compositional bias: basic and acidic residues. An N0 binding region spans residues 33–41 (DAVLSSEPT). A compositionally biased stretch (polar residues) spans 50–60 (LHNTINTSQGP). Ser68 bears the Phosphoserine; by host mark. A compositionally biased stretch (basic and acidic residues) spans 83 to 101 (RSGEESRVSGRTSKPEAEA). Phosphoserine; by host is present on Ser125. The segment covering 150–168 (GIEDENREMAAHPDKRGED) has biased composition (basic and acidic residues). Positions 191 to 206 (ASNNGRSMEPGSSHSA) are enriched in polar residues. 3 positions are modified to phosphoserine; by host: Ser192, Ser249, and Ser257. The tract at residues 344 to 411 (FESSRDASYV…SFRDIYKRFS (68 aa)) is multimerization. The stretch at 364 to 429 (YAEMTFNVCG…LLMSNLSTLH (66 aa)) forms a coiled coil. The l protein binding stretch occupies residues 412–445 (EYQKEQNSLLMSNLSTLHIITDRGGKTDNTDSLT). Ser447 and Ser449 each carry phosphoserine; by host. The interval 479 to 568 (DLIREDEFRD…VEEDIESLTN (90 aa)) is interaction with the nucleocapsid (N-RNA).

It belongs to the respirovirus P protein family. Homotetramer. Interacts (via multimerization domain) with polymerase L; this interaction forms the polymerase complex. Interacts (via N-terminus) with N0; this interaction allows P to chaperon N0 before encapsidation and form the N-P complex. Interacts (via C-terminus) with N-RNA template; this interaction positions the polymerase on the template. Post-translationally, phosphorylated by PKC/PRKCZ, and other unknown kinases. Phosphorylation is necessary for viral transcription and replication. The N-terminus contains the majority of phosphorylated sites. Ser-249 is the major site of phosphorylation, but is not necessary for most functions.

It localises to the host cytoplasm. Functionally, essential cofactor of the RNA polymerase L that plays a central role in the transcription and replication by forming the polymerase complex with RNA polymerase L and recruiting L to the genomic N-RNA template for RNA synthesis. Also plays a central role in the encapsidation of nascent RNA chains by forming the encapsidation complex with the nucleocapsid protein N (N-P complex). Acts as a chaperone for newly synthesized free N protein, so-called N0, allowing encapsidation of nascent RNA chains during replication. The nucleoprotein protein N prevents excessive phosphorylation of P, which leads to down-regulation of viral transcription/ replication. Participates, together with N, in the formation of viral factories (viroplasms), which are large inclusions in the host cytoplasm where replication takes place. Recruits host PI4KB and remodel the host endoplasmic reticulum membrane to form viral replication factories. The polypeptide is Phosphoprotein (P/V/C) (Sendai virus (strain 6/94) (SeV)).